The primary structure comprises 423 residues: POU domain, class 5, transcription factor 1.3 (423 aa).

The segment at 85 to 211 is disordered; the sequence is GALSSGDPSP…GSGNEEDGTT (127 aa). The segment covering 94-110 has biased composition (basic and acidic residues); it reads PEGRNEEDHGSISEERS. 3 stretches are compositionally biased toward polar residues: residues 111-120, 156-173, and 194-203; these read SGTPSPNSPM, PQQS…GASN, and PSPNNASFGS. The POU-specific domain occupies 207-281; it reads EDGTTLEEME…LLEQWLGEAE (75 aa). The segment at residues 301 to 360 is a DNA-binding region (homeobox); that stretch reads KRKMRTCFDSVLKGRLEGHFMCNQKPGARELAEIAKELGLEKDVVRVWFCNRRQKEKSKS.

The protein belongs to the POU transcription factor family. Class-5 subfamily. In terms of assembly, interacts with the transcription factors tcf7l1/tcf3 and vegt.

Its subcellular location is the nucleus. In terms of biological role, transcription factor that binds to the octamer motif (5'-ATTTGCAT-3'). Antagonizes the activity of nodal/activin signaling during gastrulation to suppress mesendoderm formation. Acts maternally to inhibit vegt and beta-catenin-activated gene transcription, probably by forming a transcriptional repression complex on the promoters of target genes. Binds to an octamer motif in interspersed RNA. This is POU domain, class 5, transcription factor 1.3 (pou5f1.3) from Xenopus tropicalis (Western clawed frog).